Here is a 198-residue protein sequence, read N- to C-terminus: V-type proton ATPase subunit E (198 aa).

The protein belongs to the V-ATPase E subunit family.

Its function is as follows. Produces ATP from ADP in the presence of a proton gradient across the membrane. This Borrelia hermsii (strain HS1 / DAH) protein is V-type proton ATPase subunit E.